Here is a 229-residue protein sequence, read N- to C-terminus: Cytochrome b6-f complex iron-sulfur subunit, chloroplastic (229 aa).

Residues 1–50 (MASSSLSPATQLGSSRSALMAMSSGLFVKPTKMNHQMVRKEKIGLRISCQ) constitute a chloroplast transit peptide. The helical transmembrane segment at 68–90 (LNLLLLGALSLPTGYMLVPYATF) threads the bilayer. The region spanning 115 to 211 (AAEWLKTHGP…ADIDEAGKVL (97 aa)) is the Rieske domain. Residues Cys-157, His-159, Cys-175, and His-178 each contribute to the [2Fe-2S] cluster site. A disulfide bond links Cys-162 and Cys-177. Ser-196 bears the Phosphoserine mark.

The protein belongs to the Rieske iron-sulfur protein family. As to quaternary structure, the 4 large subunits of the cytochrome b6-f complex are cytochrome b6, subunit IV (17 kDa polypeptide, petD), cytochrome f and the Rieske protein, while the 4 small subunits are petG, petL, petM and petN. The complex functions as a dimer. Interacts with PGRL1A. Component of a mitochondrial large protein complex that contains, at least, MIC60, DGS1, TOM40, TOM20 proteins, and petC/RISP. The cofactor is [2Fe-2S] cluster. In terms of tissue distribution, confined to photosynthetic tissues, with highest levels in flowers. In leaves, mostly localized in mesophyll cells. In stems, confined to the peripheral ring of chlorenchyma and adjoining groups of cells associated with the vascular bundles. In siliques, present in green wall of the fruit and in peduncle but not in the translucide white septum of the seeds.

The protein resides in the plastid. It is found in the chloroplast thylakoid membrane. The protein localises to the mitochondrion inner membrane. It carries out the reaction 2 oxidized [plastocyanin] + a plastoquinol + 2 H(+)(in) = 2 reduced [plastocyanin] + a plastoquinone + 4 H(+)(out). Essential protein for photoautotrophism. Confers resistance to photo-oxidative damages by contributing to the thermal dissipation of light energy and to lumenal acidification (increase of pH gradient). Component of the cytochrome b6-f complex, which mediates electron transfer between photosystem II (PSII) and photosystem I (PSI), cyclic electron flow around PSI, and state transitions. In Arabidopsis thaliana (Mouse-ear cress), this protein is Cytochrome b6-f complex iron-sulfur subunit, chloroplastic.